Consider the following 358-residue polypeptide: Prostaglandin E2 receptor EP2 subtype (358 aa).

At Met1–Glu23 the chain is on the extracellular side. Residues Asn3 and Asn6 are each glycosylated (N-linked (GlcNAc...) asparagine). The chain crosses the membrane as a helical span at residues Ser24–Ala47. The Cytoplasmic portion of the chain corresponds to Arg48 to Ser65. A helical transmembrane segment spans residues Leu66–Ala91. At Ser92–Tyr111 the chain is on the extracellular side. Asn96 carries N-linked (GlcNAc...) asparagine glycosylation. An intrachain disulfide couples Cys109 to Cys187. Residues Phe112–Leu132 traverse the membrane as a helical segment. Residues Glu133–Ser151 are Cytoplasmic-facing. Residues Gly152 to Gly176 form a helical membrane-spanning segment. Residues Gln177–Gln198 are Extracellular-facing. Residues Leu199–Ile223 form a helical membrane-spanning segment. Topologically, residues Arg224–His262 are cytoplasmic. The tract at residues Arg231–Arg253 is disordered. The helical transmembrane segment at Leu263 to Met286 threads the bilayer. N-linked (GlcNAc...) asparagine glycosylation occurs at Asn287. Over Asn287–Gln299 the chain is Extracellular. Residues Ala300–Leu323 form a helical membrane-spanning segment. Over Arg324–Leu358 the chain is Cytoplasmic.

This sequence belongs to the G-protein coupled receptor 1 family. Placenta and lung.

It is found in the cell membrane. Receptor for prostaglandin E2 (PGE2). The activity of this receptor is mediated by G(s) proteins that stimulate adenylate cyclase. The subsequent raise in intracellular cAMP is responsible for the relaxing effect of this receptor on smooth muscle. The protein is Prostaglandin E2 receptor EP2 subtype (PTGER2) of Homo sapiens (Human).